Consider the following 431-residue polypeptide: MSLHVKGPVCQTCGDIGFEEALVFCDSCMFESIHRYCLGITPIPFTEYITWICEDCDNSESDSDCNEVDQTVKKKKKSRNQPLVVLAEDNVLQEPLEGSKREESSCSRKPHELTCLDGNGESVLEAADSSSVPDHSSCTSKRKEVDQTANLGHILERSEKKKKKKKKKKSINHSPPVLAVEDHELQGTTNVVEPVEVSSSSPTKETMESKRQESSDSRKPHELTCLVGDSETANSSSVPEHNSCAVKKRKLSSGNKQIQLADGSSSCRVAESNMPLTLTSRNYRAQPIKIPIWRGLMSVKGGNSCTMDGIVAHVSSLACPKVHETASSLKGRLSAEILPRLEVWPKTFLKNGGPKDESVALFFFPSSESNDEKVFDSLVDKMKKNDSAMRCVLNDAELLLFTSYMLPKDSWTFNSKYYLWGVFKPRQTSRY.

The PHD-type zinc finger occupies 7-59; that stretch reads GPVCQTCGDIGFEEALVFCDSCMFESIHRYCLGITPIPFTEYITWICEDCDNS. 8 residues coordinate Zn(2+): cysteine 10, cysteine 13, cysteine 25, cysteine 28, histidine 34, cysteine 37, cysteine 53, and cysteine 56. The segment at 125–221 is disordered; sequence EAADSSSVPD…QESSDSRKPH (97 aa). The segment covering 128 to 139 has biased composition (polar residues); sequence DSSSVPDHSSCT. Residues 160 to 171 show a composition bias toward basic residues; sequence KKKKKKKKKKSI. Positions 191–202 are enriched in low complexity; it reads VVEPVEVSSSSP. A compositionally biased stretch (basic and acidic residues) spans 205-221; that stretch reads ETMESKRQESSDSRKPH.

As to quaternary structure, interacts directly with AIPP3/BDT1.

Its function is as follows. Together with AIPP3/BDT1, cooperates to form a BAH-PHD bivalent histone reader complex able to read histone H3 lysine 27 trimethylation (H3K27me3) histone marks in order to regulate transcription, especially to prevent early flowering; promotes AIPP3/BDT1 binding to H3K27me3. This is PHD finger-containing protein 1 from Arabidopsis thaliana (Mouse-ear cress).